The chain runs to 284 residues: Insulin-like growth factor-binding protein 2 (284 aa).

A signal peptide spans 1–21; it reads MGLSRYLLGLLLGVLCTPAPA. An IGFBP N-terminal domain is found at 23-106; that stretch reads VLFRCPPCSP…VLGLGTCGKR (84 aa). 6 disulfide bridges follow: Cys27–Cys56, Cys30–Cys58, Cys38–Cys59, Cys47–Cys62, Cys70–Cys83, and Cys77–Cys103. Residues 108–184 form a disordered region; sequence DTEYGSSQER…KSEDKKRPAR (77 aa). Residues 117–127 show a composition bias toward basic and acidic residues; it reads RGTELPEERSD. Low complexity predominate over residues 136–145; that stretch reads EAGPAVAGEA. The segment covering 152 to 180 has biased composition (basic and acidic residues); sequence KKEMKEIAVTRERANEQQRSKSNKSEDKK. In terms of domain architecture, Thyroglobulin type-1 spans 184–266; the sequence is RSLCQLQLDQ…SPTIRGDPEC (83 aa). Intrachain disulfides connect Cys187–Cys221, Cys232–Cys243, and Cys245–Cys266. Residues 261 to 263 carry the Cell attachment site motif; sequence RGD.

In terms of assembly, interacts with igf1 and igf2.

The protein localises to the secreted. In terms of biological role, IGF-binding proteins prolong the half-life of the IGFs and have been shown to either inhibit or stimulate the growth promoting effects of the IGFs on cell culture. They alter the interaction of IGFs with their cell surface receptors. This is Insulin-like growth factor-binding protein 2 from Xenopus tropicalis (Western clawed frog).